The sequence spans 194 residues: Crossover junction endodeoxyribonuclease RuvC (194 aa).

Catalysis depends on residues D8, E72, and D144. Residues D8, E72, and D144 each contribute to the Mg(2+) site.

This sequence belongs to the RuvC family. Homodimer which binds Holliday junction (HJ) DNA. The HJ becomes 2-fold symmetrical on binding to RuvC with unstacked arms; it has a different conformation from HJ DNA in complex with RuvA. In the full resolvosome a probable DNA-RuvA(4)-RuvB(12)-RuvC(2) complex forms which resolves the HJ. Mg(2+) serves as cofactor.

Its subcellular location is the cytoplasm. It catalyses the reaction Endonucleolytic cleavage at a junction such as a reciprocal single-stranded crossover between two homologous DNA duplexes (Holliday junction).. In terms of biological role, the RuvA-RuvB-RuvC complex processes Holliday junction (HJ) DNA during genetic recombination and DNA repair. Endonuclease that resolves HJ intermediates. Cleaves cruciform DNA by making single-stranded nicks across the HJ at symmetrical positions within the homologous arms, yielding a 5'-phosphate and a 3'-hydroxyl group; requires a central core of homology in the junction. The consensus cleavage sequence is 5'-(A/T)TT(C/G)-3'. Cleavage occurs on the 3'-side of the TT dinucleotide at the point of strand exchange. HJ branch migration catalyzed by RuvA-RuvB allows RuvC to scan DNA until it finds its consensus sequence, where it cleaves and resolves the cruciform DNA. This Psychrobacter arcticus (strain DSM 17307 / VKM B-2377 / 273-4) protein is Crossover junction endodeoxyribonuclease RuvC.